We begin with the raw amino-acid sequence, 393 residues long: MKVLVINCGSSSLKYQLFDMTDESVLCKGLVERIGIEGSKLTHKVNGEKLVVEEPMKDHTEAINHVFDALLDEKYGVIKSLDEVSAIGHRVLHGGDKLTESCIIDDKVKDKIREFIKFGPLHNPANLMGIEACEKLAPGKKNIAVFDTAFHQTMPAKTFMYAIPYEYYEDYRLRKFGFHGTSHRYITLRTQQLLGKEDINIITVHLGNGSSIAAVKNGKCYDTSMGLTPLEGLLMGTRSGDLDPTVMTFLMNEKGYSADEMNQILNKKSGVLGVSGISSDFRDLEEEAEKGNDRAQLALDMFIERVKRYIGGYMAELGHVDAICFAGGIGENSSSMRKDILDTFEELGVKLDLEKNNTREEALISADDSKVKVYVVPTNEELMIARDTLELAK.

A Mg(2+)-binding site is contributed by N7. K14 lines the ATP pocket. Substrate is bound at residue R90. The Proton donor/acceptor role is filled by D147. ATP contacts are provided by residues 205-209, 280-282, and 328-332; these read HLGNG, DFR, and GIGEN. E380 contributes to the Mg(2+) binding site.

It belongs to the acetokinase family. As to quaternary structure, homodimer. It depends on Mg(2+) as a cofactor. Mn(2+) is required as a cofactor.

Its subcellular location is the cytoplasm. The enzyme catalyses acetate + ATP = acetyl phosphate + ADP. It functions in the pathway metabolic intermediate biosynthesis; acetyl-CoA biosynthesis; acetyl-CoA from acetate: step 1/2. Catalyzes the formation of acetyl phosphate from acetate and ATP. Can also catalyze the reverse reaction. The sequence is that of Acetate kinase from Finegoldia magna (strain ATCC 29328 / DSM 20472 / WAL 2508) (Peptostreptococcus magnus).